Reading from the N-terminus, the 541-residue chain is Beta-glucuronidase (541 aa).

The signal sequence occupies residues 1-20 (MHHHPITLLSLLLGAAQSIA). N-linked (GlcNAc...) asparagine glycans are attached at residues N69, N115, and N157. The active-site Proton donor is the E208. Residues N217, N291, and N304 are each glycosylated (N-linked (GlcNAc...) asparagine). The active-site Nucleophile is the E324. N380, N426, N441, N483, and N512 each carry an N-linked (GlcNAc...) asparagine glycan.

The protein belongs to the glycosyl hydrolase 79 family. Post-translationally, N-glycosylated.

It localises to the secreted. It carries out the reaction a beta-D-glucuronoside + H2O = D-glucuronate + an alcohol. Its function is as follows. Beta-glucuronidase that hydrolyzes beta-glucuronosyl and 4-O-methyl-beta-glucuronosyl residues of arabinogalactan-protein. Hydrolyzed heparan sulfate only very weakly. Has no activity on xylan from birchwood. Able to catalyze the transglycosylation of glucuronic acid (GlcA) residues from p-nitrophenyl-beta-glucuronic acid (PNP beta-GlcA) to various monosaccharide acceptors such as glucose, galactose and xylose. In Aspergillus niger (strain ATCC MYA-4892 / CBS 513.88 / FGSC A1513), this protein is Beta-glucuronidase.